The following is a 355-amino-acid chain: Peptide chain release factor 1 (355 aa).

An N5-methylglutamine modification is found at glutamine 231.

The protein belongs to the prokaryotic/mitochondrial release factor family. Post-translationally, methylated by PrmC. Methylation increases the termination efficiency of RF1.

Its subcellular location is the cytoplasm. Peptide chain release factor 1 directs the termination of translation in response to the peptide chain termination codons UAG and UAA. The polypeptide is Peptide chain release factor 1 (Sulfurovum sp. (strain NBC37-1)).